Reading from the N-terminus, the 250-residue chain is Putative inner dynein arm light chain, axonemal (250 aa).

The stretch at 168–250 (MRKALQAHEE…QLEGITAPKK (83 aa)) forms a coiled coil.

This sequence belongs to the inner dynein arm light chain family.

Its subcellular location is the cell projection. It is found in the cilium. The protein resides in the dynein axonemal particle. Its function is as follows. May play a dynamic role in flagellar motility. In Drosophila melanogaster (Fruit fly), this protein is Putative inner dynein arm light chain, axonemal.